A 465-amino-acid polypeptide reads, in one-letter code: Juvenile hormone epoxide hydrolase 2 (465 aa).

Residues 7 to 27 (ILWIAIVIGLGVLYYEITKEF) traverse the membrane as a helical segment. The Nucleophile role is filled by aspartate 224. The active-site Proton donor is tyrosine 370. The Proton acceptor role is filled by histidine 427.

The protein belongs to the peptidase S33 family.

The protein localises to the microsome membrane. The protein resides in the endoplasmic reticulum membrane. The catalysed reaction is cis-stilbene oxide + H2O = (1R,2R)-hydrobenzoin. It carries out the reaction 1-(4-methoxyphenyl)-N-methyl-N-[(3-methyloxetan-3-yl)methyl]methanamine + H2O = 2-{[(4-methoxybenzyl)(methyl)amino]methyl}-2-methylpropane-1,3-diol. Functionally, catalyzes juvenile hormone hydrolysis. This is Juvenile hormone epoxide hydrolase 2 from Ctenocephalides felis (Cat flea).